The chain runs to 347 residues: UDP-3-O-acylglucosamine N-acyltransferase (347 aa).

His248 (proton acceptor) is an active-site residue.

This sequence belongs to the transferase hexapeptide repeat family. LpxD subfamily. In terms of assembly, homotrimer.

It catalyses the reaction a UDP-3-O-[(3R)-3-hydroxyacyl]-alpha-D-glucosamine + a (3R)-hydroxyacyl-[ACP] = a UDP-2-N,3-O-bis[(3R)-3-hydroxyacyl]-alpha-D-glucosamine + holo-[ACP] + H(+). The protein operates within bacterial outer membrane biogenesis; LPS lipid A biosynthesis. Catalyzes the N-acylation of UDP-3-O-acylglucosamine using 3-hydroxyacyl-ACP as the acyl donor. Is involved in the biosynthesis of lipid A, a phosphorylated glycolipid that anchors the lipopolysaccharide to the outer membrane of the cell. The chain is UDP-3-O-acylglucosamine N-acyltransferase from Parasynechococcus marenigrum (strain WH8102).